A 240-amino-acid chain; its full sequence is Lipoprotein signal peptidase (240 aa).

Helical transmembrane passes span 38–58, 73–93, 98–118, and 120–140; these read LIWK…TSFL, LIPG…FGTL, PSLV…VLLF, and SNYL…SNII. Active-site residues include Asp-162 and Asp-179. Residues 177–197 traverse the membrane as a helical segment; sequence FPDTFVIIGMIFVGIQIIISF.

Belongs to the peptidase A8 family.

The protein resides in the cell membrane. It catalyses the reaction Release of signal peptides from bacterial membrane prolipoproteins. Hydrolyzes -Xaa-Yaa-Zaa-|-(S,diacylglyceryl)Cys-, in which Xaa is hydrophobic (preferably Leu), and Yaa (Ala or Ser) and Zaa (Gly or Ala) have small, neutral side chains.. It functions in the pathway protein modification; lipoprotein biosynthesis (signal peptide cleavage). In terms of biological role, this protein specifically catalyzes the removal of signal peptides from prolipoproteins. The polypeptide is Lipoprotein signal peptidase (Malacoplasma penetrans (strain HF-2) (Mycoplasma penetrans)).